The sequence spans 231 residues: Endonuclease NucS (231 aa).

Belongs to the NucS endonuclease family.

The protein localises to the cytoplasm. Functionally, cleaves both 3' and 5' ssDNA extremities of branched DNA structures. The chain is Endonuclease NucS from Kocuria rhizophila (strain ATCC 9341 / DSM 348 / NBRC 103217 / DC2201).